The sequence spans 91 residues: Putative regulatory protein DSY2730 (91 aa).

It belongs to the RemA family.

The protein is Putative regulatory protein DSY2730 of Desulfitobacterium hafniense (strain Y51).